A 439-amino-acid chain; its full sequence is Amino-acid acetyltransferase (439 aa).

The 141-residue stretch at 289–429 (EDIRIATVQD…DHYNYQRRSK (141 aa)) folds into the N-acetyltransferase domain.

The protein belongs to the acetyltransferase family. ArgA subfamily.

It localises to the cytoplasm. It carries out the reaction L-glutamate + acetyl-CoA = N-acetyl-L-glutamate + CoA + H(+). It functions in the pathway amino-acid biosynthesis; L-arginine biosynthesis; N(2)-acetyl-L-ornithine from L-glutamate: step 1/4. This is Amino-acid acetyltransferase from Mannheimia succiniciproducens (strain KCTC 0769BP / MBEL55E).